The chain runs to 167 residues: Peptide deformylase (167 aa).

Fe cation-binding residues include Cys-90 and His-132. Glu-133 is an active-site residue. Position 136 (His-136) interacts with Fe cation.

Belongs to the polypeptide deformylase family. It depends on Fe(2+) as a cofactor.

It carries out the reaction N-terminal N-formyl-L-methionyl-[peptide] + H2O = N-terminal L-methionyl-[peptide] + formate. Its function is as follows. Removes the formyl group from the N-terminal Met of newly synthesized proteins. Requires at least a dipeptide for an efficient rate of reaction. N-terminal L-methionine is a prerequisite for activity but the enzyme has broad specificity at other positions. This Dehalococcoides mccartyi (strain CBDB1) protein is Peptide deformylase.